A 278-amino-acid chain; its full sequence is Nucleotide-binding protein Tbd_0529 (278 aa).

An ATP-binding site is contributed by 8 to 15; that stretch reads GLSGSGKS. A GTP-binding site is contributed by 57–60; that stretch reads DARS.

The protein belongs to the RapZ-like family.

In terms of biological role, displays ATPase and GTPase activities. The chain is Nucleotide-binding protein Tbd_0529 from Thiobacillus denitrificans (strain ATCC 25259 / T1).